The sequence spans 207 residues: Large ribosomal subunit protein uL4 (207 aa).

The interval alanine 58–glycine 85 is disordered.

Belongs to the universal ribosomal protein uL4 family. Part of the 50S ribosomal subunit.

In terms of biological role, one of the primary rRNA binding proteins, this protein initially binds near the 5'-end of the 23S rRNA. It is important during the early stages of 50S assembly. It makes multiple contacts with different domains of the 23S rRNA in the assembled 50S subunit and ribosome. Forms part of the polypeptide exit tunnel. In Geotalea uraniireducens (strain Rf4) (Geobacter uraniireducens), this protein is Large ribosomal subunit protein uL4.